Consider the following 280-residue polypeptide: Phospholipase C D (280 aa).

The tract at residues valine 258–cysteine 280 is disordered.

It belongs to the bacterial phospholipase C family.

The protein localises to the secreted. Its subcellular location is the cell wall. The enzyme catalyses a 1,2-diacyl-sn-glycero-3-phosphocholine + H2O = phosphocholine + a 1,2-diacyl-sn-glycerol + H(+). The catalysed reaction is 1,2-dihexadecanoyl-sn-glycero-3-phosphocholine + H2O = 1,2-dihexadecanoyl-sn-glycerol + phosphocholine + H(+). Functionally, involved in virulence. Induces cytotoxic effects on mouse macrophage cell lines, via direct or indirect enzymatic hydrolysis of cell membrane phospholipids. Hydrolyzes phosphatidylcholine. Does not have hemolytic activity. This is Phospholipase C D from Mycobacterium tuberculosis (strain ATCC 25618 / H37Rv).